The following is an 83-amino-acid chain: Alpha-conotoxin QcIA (83 aa).

A signal peptide spans 1 to 21 (MGMRMMFTLFLLAVLSTTVVS). Residues 22–48 (FTLDRASNGRDAAADSKAADQIAQTVR) constitute a propeptide that is removed on maturation. Cystine bridges form between Cys51-Cys57 and Cys52-Cys65. Residues 53-55 (SNP) form a ser-Xaa-Pro motif, crucial for potent interaction with nAChR region. A propeptide spanning residues 66–83 (RRTLMLQNPLNHDMSPSA) is cleaved from the precursor.

The protein belongs to the conotoxin A superfamily. Expressed by the venom duct.

Its subcellular location is the secreted. Functionally, alpha-conotoxins bind to the nicotinic acetylcholine receptors (nAChR) and inhibit them. A synthetic amidated version of this toxin potently and preferentially antagonizes neuronal rat alpha-3-beta-2 (IC(50)=55.7 nM) and alpha-6/alpha-3-beta-4 (IC(50)=90.69 nM) nAChRs. The polypeptide is Alpha-conotoxin QcIA (Conus quercinus (Oak cone)).